A 745-amino-acid polypeptide reads, in one-letter code: Serine/threonine-protein kinase BUR1 (745 aa).

Residues 1 to 21 form a disordered region; it reads MSVIAGHHVPRSNDQRQYDTP. In terms of domain architecture, Protein kinase spans 44-349; that stretch reads YEVIEKLGQG…ALDALNHKFF (306 aa). Residues 50–58 and Lys-73 each bind ATP; that span reads LGQGTFGVV. Asp-179 (proton acceptor) is an active-site residue. Composition is skewed to basic and acidic residues over residues 380–406, 428–475, and 493–508; these read DKEQ…RYNA, DYID…DIQN, and KLRE…KKYD. The tract at residues 380-701 is disordered; it reads DKEQAVSELK…EVSDLEEDSD (322 aa). The span at 516–534 shows a compositional bias: low complexity; the sequence is SRGSKSPSPSKLSSISQSK. The span at 547 to 557 shows a compositional bias: basic and acidic residues; it reads ASRESSLERKQ. Polar residues-rich tracts occupy residues 558-567 and 586-598; these read VSNGIRTTTD and LTSN…PTRN. The segment covering 599 to 631 has biased composition (basic and acidic residues); sequence KSVERPKDLEKPTNGVTEDRNKKPVLEEKKEVV. The segment covering 632–660 has biased composition (low complexity); that stretch reads KPNLAIPKIKKSSSLVSLSSRSSTTPVIS. Residues 661 to 674 are compositionally biased toward polar residues; that stretch reads NPSKVTKRAASSVT. Residues 692 to 701 are compositionally biased toward acidic residues; that stretch reads EVSDLEEDSD.

The protein belongs to the protein kinase superfamily. CMGC Ser/Thr protein kinase family. CDC2/CDKX subfamily.

It localises to the nucleus. It catalyses the reaction L-seryl-[protein] + ATP = O-phospho-L-seryl-[protein] + ADP + H(+). The enzyme catalyses L-threonyl-[protein] + ATP = O-phospho-L-threonyl-[protein] + ADP + H(+). It carries out the reaction [DNA-directed RNA polymerase] + ATP = phospho-[DNA-directed RNA polymerase] + ADP + H(+). Functionally, serine/threonine-protein kinase involved in transcription regulation. Phosphorylates the UBC2/RAD6 ubiquitin-conjugating enzyme (E2), leading to monoubiquitination of histone H2B and the silencing of telomeric-associated genes. Also required for histone H3 methylation. Necessary for the recovery from pheromone-induced growth arrest in the cell cycle G1 phase. Required for pseudohyphal growth and virulence in mice. The chain is Serine/threonine-protein kinase BUR1 (CRK1) from Candida albicans (strain SC5314 / ATCC MYA-2876) (Yeast).